The sequence spans 153 residues: SsrA-binding protein (153 aa).

Belongs to the SmpB family.

It localises to the cytoplasm. Its function is as follows. Required for rescue of stalled ribosomes mediated by trans-translation. Binds to transfer-messenger RNA (tmRNA), required for stable association of tmRNA with ribosomes. tmRNA and SmpB together mimic tRNA shape, replacing the anticodon stem-loop with SmpB. tmRNA is encoded by the ssrA gene; the 2 termini fold to resemble tRNA(Ala) and it encodes a 'tag peptide', a short internal open reading frame. During trans-translation Ala-aminoacylated tmRNA acts like a tRNA, entering the A-site of stalled ribosomes, displacing the stalled mRNA. The ribosome then switches to translate the ORF on the tmRNA; the nascent peptide is terminated with the 'tag peptide' encoded by the tmRNA and targeted for degradation. The ribosome is freed to recommence translation, which seems to be the essential function of trans-translation. The protein is SsrA-binding protein of Cytophaga hutchinsonii (strain ATCC 33406 / DSM 1761 / CIP 103989 / NBRC 15051 / NCIMB 9469 / D465).